A 284-amino-acid chain; its full sequence is Probable palmitoyltransferase ZDHHC24 (284 aa).

Residues 1-18 are Cytoplasmic-facing; the sequence is MGESWAARGAEGAPARMP. A helical membrane pass occupies residues 19–39; it reads LVLTALWAAVVVLELAYVMVL. At 40 to 52 the chain is on the extracellular side; that stretch reads GPGPPPLGPLARA. Residues 53-73 form a helical membrane-spanning segment; that stretch reads LQLALAAYQLLNLLGNVVLFL. Over 74 to 137 the chain is Cytoplasmic; sequence RSDPSIRGVM…GCCVGFHNYR (64 aa). The region spanning 94–144 is the DHHC domain; it reads AYCYQCQSQVPPRSGHCSACRVCILRRDHHCRLLGCCVGFHNYRPFLCLLL. The active-site S-palmitoyl cysteine intermediate is Cys124. The helical transmembrane segment at 138–158 threads the bilayer; that stretch reads PFLCLLLHSAGVLLHISVLLG. The Extracellular portion of the chain corresponds to 159 to 166; that stretch reads PALSALLQ. Residues 167–187 traverse the membrane as a helical segment; the sequence is AHSALYTVALLLLPWLMLLTG. Residues 188-195 lie on the Cytoplasmic side of the membrane; the sequence is KVSLAQFA. The helical transmembrane segment at 196-216 threads the bilayer; it reads LAFVVDTCVAGALLCGAGLLF. At 217 to 284 the chain is on the extracellular side; that stretch reads HGMLLLRGQT…TPGDVGLVTS (68 aa).

Belongs to the DHHC palmitoyltransferase family.

It is found in the membrane. The catalysed reaction is L-cysteinyl-[protein] + hexadecanoyl-CoA = S-hexadecanoyl-L-cysteinyl-[protein] + CoA. Functionally, probable palmitoyltransferase that could catalyze the addition of palmitate onto various protein substrates. This is Probable palmitoyltransferase ZDHHC24 from Mus musculus (Mouse).